A 39-amino-acid chain; its full sequence is Photosystem II reaction center protein Y (39 aa).

A helical transmembrane segment spans residues 4 to 24; that stretch reads RVIVVVSPLLIAATWAAINIG.

This sequence belongs to the PsbY family. PSII is composed of 1 copy each of membrane proteins PsbA, PsbB, PsbC, PsbD, PsbE, PsbF, PsbH, PsbI, PsbJ, PsbK, PsbL, PsbM, PsbT, PsbX, PsbY, PsbZ, Psb30/Ycf12, peripheral proteins PsbO, CyanoQ (PsbQ), PsbU, PsbV and a large number of cofactors. It forms dimeric complexes.

It is found in the cellular thylakoid membrane. Loosely associated component of the core of photosystem II (PSII), it is not always seen in crystals. PSII is a light-driven water plastoquinone oxidoreductase, using light energy to abstract electrons from H(2)O, generating a proton gradient subsequently used for ATP formation. The polypeptide is Photosystem II reaction center protein Y (Synechocystis sp. (strain ATCC 27184 / PCC 6803 / Kazusa)).